The sequence spans 139 residues: Tol-Pal system protein TolR (139 aa).

The helical transmembrane segment at 15–35 threads the bilayer; that stretch reads IVPFLDVLLVLVLIFMATAPI.

The protein belongs to the ExbD/TolR family. As to quaternary structure, the Tol-Pal system is composed of five core proteins: the inner membrane proteins TolA, TolQ and TolR, the periplasmic protein TolB and the outer membrane protein Pal. They form a network linking the inner and outer membranes and the peptidoglycan layer.

The protein resides in the cell inner membrane. In terms of biological role, part of the Tol-Pal system, which plays a role in outer membrane invagination during cell division and is important for maintaining outer membrane integrity. This chain is Tol-Pal system protein TolR, found in Haemophilus influenzae (strain ATCC 51907 / DSM 11121 / KW20 / Rd).